The following is a 312-amino-acid chain: 6-hydroxy-3-succinoylpyridine 3-monooxygenase HspA (312 aa).

The region spanning 14–210 (IYIDGYNFYY…RSANTDLIKF (197 aa)) is the NYN domain.

It catalyses the reaction 4-(6-hydroxypyridin-3-yl)-4-oxobutanoate + 2 NADH + O2 + 2 H(+) = 2,5-dihydroxypyridine + succinate semialdehyde + 2 NAD(+) + H2O. It functions in the pathway alkaloid degradation; nicotine degradation. Functionally, involved in the nicotine degradation. Catalyzes the cleavage of 6-hydroxy-3-succinoylpyridine (HSP) by incorporation of oxygen at the 3-position to produce to 2,5-dihydroxypyridine (DHP) and succinic semialdehyde. The chain is 6-hydroxy-3-succinoylpyridine 3-monooxygenase HspA from Pseudomonas putida (strain DSM 28022 / S16).